The primary structure comprises 276 residues: Large ribosomal subunit protein uL2 (276 aa).

The tract at residues 225–276 (MNPVDHPHGGGEGRAPVGRKHPVTPWGKPAMGAKTRKKRKLSDKLIVKPRNK) is disordered. The segment covering 258–276 (KTRKKRKLSDKLIVKPRNK) has biased composition (basic residues).

This sequence belongs to the universal ribosomal protein uL2 family. Part of the 50S ribosomal subunit. Forms a bridge to the 30S subunit in the 70S ribosome.

One of the primary rRNA binding proteins. Required for association of the 30S and 50S subunits to form the 70S ribosome, for tRNA binding and peptide bond formation. It has been suggested to have peptidyltransferase activity; this is somewhat controversial. Makes several contacts with the 16S rRNA in the 70S ribosome. This Moorella thermoacetica (strain ATCC 39073 / JCM 9320) protein is Large ribosomal subunit protein uL2.